Here is a 71-residue protein sequence, read N- to C-terminus: Small ribosomal subunit protein bS21 (71 aa).

Belongs to the bacterial ribosomal protein bS21 family.

This Vesicomyosocius okutanii subsp. Calyptogena okutanii (strain HA) protein is Small ribosomal subunit protein bS21.